We begin with the raw amino-acid sequence, 294 residues long: Bifunctional protein FolD (294 aa).

Residues 176–178 (GAS), S201, and I242 contribute to the NADP(+) site.

Belongs to the tetrahydrofolate dehydrogenase/cyclohydrolase family. As to quaternary structure, homodimer.

The catalysed reaction is (6R)-5,10-methylene-5,6,7,8-tetrahydrofolate + NADP(+) = (6R)-5,10-methenyltetrahydrofolate + NADPH. It carries out the reaction (6R)-5,10-methenyltetrahydrofolate + H2O = (6R)-10-formyltetrahydrofolate + H(+). Its pathway is one-carbon metabolism; tetrahydrofolate interconversion. Catalyzes the oxidation of 5,10-methylenetetrahydrofolate to 5,10-methenyltetrahydrofolate and then the hydrolysis of 5,10-methenyltetrahydrofolate to 10-formyltetrahydrofolate. This Bordetella petrii (strain ATCC BAA-461 / DSM 12804 / CCUG 43448) protein is Bifunctional protein FolD.